A 769-amino-acid polypeptide reads, in one-letter code: Phosphoribosylformylglycinamidine synthase subunit PurL (769 aa).

The segment covering 1 to 13 has biased composition (polar residues); that stretch reads MTGTPSAPTTSPD. Residues 1–30 form a disordered region; sequence MTGTPSAPTTSPDDQADGPGEGTVDRQPYR. The active site involves H65. Residues Y68 and K109 each contribute to the ATP site. Position 111 (E111) interacts with Mg(2+). Residues 112 to 115 and R134 contribute to the substrate site; that span reads SHNH. Catalysis depends on H113, which acts as the Proton acceptor. D135 serves as a coordination point for Mg(2+). Q260 provides a ligand contact to substrate. D288 provides a ligand contact to Mg(2+). Residue 337 to 339 participates in substrate binding; sequence ESQ. ATP is bound by residues N524 and G561. A Mg(2+)-binding site is contributed by N562. Position 564 (S564) interacts with substrate.

This sequence belongs to the FGAMS family. As to quaternary structure, monomer. Part of the FGAM synthase complex composed of 1 PurL, 1 PurQ and 2 PurS subunits.

It localises to the cytoplasm. The catalysed reaction is N(2)-formyl-N(1)-(5-phospho-beta-D-ribosyl)glycinamide + L-glutamine + ATP + H2O = 2-formamido-N(1)-(5-O-phospho-beta-D-ribosyl)acetamidine + L-glutamate + ADP + phosphate + H(+). Its pathway is purine metabolism; IMP biosynthesis via de novo pathway; 5-amino-1-(5-phospho-D-ribosyl)imidazole from N(2)-formyl-N(1)-(5-phospho-D-ribosyl)glycinamide: step 1/2. Part of the phosphoribosylformylglycinamidine synthase complex involved in the purines biosynthetic pathway. Catalyzes the ATP-dependent conversion of formylglycinamide ribonucleotide (FGAR) and glutamine to yield formylglycinamidine ribonucleotide (FGAM) and glutamate. The FGAM synthase complex is composed of three subunits. PurQ produces an ammonia molecule by converting glutamine to glutamate. PurL transfers the ammonia molecule to FGAR to form FGAM in an ATP-dependent manner. PurS interacts with PurQ and PurL and is thought to assist in the transfer of the ammonia molecule from PurQ to PurL. In Parafrankia sp. (strain EAN1pec), this protein is Phosphoribosylformylglycinamidine synthase subunit PurL.